Consider the following 1128-residue polypeptide: Major DNA-binding protein (1128 aa).

Residues 1104–1128 are required for nuclear localization; sequence LGGGGQGSGGRRKRRLATVLPGLEV.

The protein belongs to the herpesviridae major DNA-binding protein family. As to quaternary structure, homooligomers. Forms double-helical filaments necessary for the formation of replication compartments within the host nucleus. Interacts with the origin-binding protein. Interacts with the helicase primase complex; this interaction stimulates primer synthesis activity of the helicase-primase complex. Interacts with the DNA polymerase. Interacts with the alkaline exonuclease; this interaction increases its nuclease processivity.

It is found in the virion tegument. Its subcellular location is the host nucleus. Plays several crucial roles in viral infection. Participates in the opening of the viral DNA origin to initiate replication by interacting with the origin-binding protein. May disrupt loops, hairpins and other secondary structures present on ssDNA to reduce and eliminate pausing of viral DNA polymerase at specific sites during elongation. Promotes viral DNA recombination by performing strand-transfer, characterized by the ability to transfer a DNA strand from a linear duplex to a complementary single-stranded DNA circle. Can also catalyze the renaturation of complementary single strands. Additionally, reorganizes the host cell nucleus, leading to the formation of prereplicative sites and replication compartments. This process is driven by the protein which can form double-helical filaments in the absence of DNA. This Homo sapiens (Human) protein is Major DNA-binding protein.